We begin with the raw amino-acid sequence, 258 residues long: Octanoyltransferase (258 aa).

A BPL/LPL catalytic domain is found at 42-226 (NLGADTLLLL…AVVAALDGAL (185 aa)). Substrate contacts are provided by residues 80–87 (RGGKITWH), 156–158 (AIG), and 169–171 (GFS). C187 acts as the Acyl-thioester intermediate in catalysis.

This sequence belongs to the LipB family.

Its subcellular location is the cytoplasm. The enzyme catalyses octanoyl-[ACP] + L-lysyl-[protein] = N(6)-octanoyl-L-lysyl-[protein] + holo-[ACP] + H(+). Its pathway is protein modification; protein lipoylation via endogenous pathway; protein N(6)-(lipoyl)lysine from octanoyl-[acyl-carrier-protein]: step 1/2. Functionally, catalyzes the transfer of endogenously produced octanoic acid from octanoyl-acyl-carrier-protein onto the lipoyl domains of lipoate-dependent enzymes. Lipoyl-ACP can also act as a substrate although octanoyl-ACP is likely to be the physiological substrate. The chain is Octanoyltransferase from Rhodococcus opacus (strain B4).